We begin with the raw amino-acid sequence, 60 residues long: Large ribosomal subunit protein bL32 (60 aa).

A compositionally biased stretch (basic residues) spans 1–20 (MAVPKRKTSPSRRNMRRSHH). Residues 1 to 60 (MAVPKRKTSPSRRNMRRSHHALGANSFIEDKDTGELRRPHHVDLKTGMYNGKQILTPKED) form a disordered region. The span at 28 to 44 (IEDKDTGELRRPHHVDL) shows a compositional bias: basic and acidic residues.

It belongs to the bacterial ribosomal protein bL32 family.

The protein is Large ribosomal subunit protein bL32 of Caulobacter vibrioides (strain ATCC 19089 / CIP 103742 / CB 15) (Caulobacter crescentus).